We begin with the raw amino-acid sequence, 302 residues long: GTPase Era (302 aa).

The 168-residue stretch at 8-175 (HSGFVAIIGR…LTTLKGQLPE (168 aa)) folds into the Era-type G domain. Positions 16–23 (GRPNVGKS) are G1. Residue 16 to 23 (GRPNVGKS) participates in GTP binding. The segment at 42 to 46 (QTTRN) is G2. Residues 63 to 66 (DTPG) are G3. GTP contacts are provided by residues 63–67 (DTPGI) and 125–128 (NKID). Residues 125–128 (NKID) are G4. Positions 154–156 (ISA) are G5. Residues 206 to 283 (TRQEVPHSTA…YLELWVKVQE (78 aa)) enclose the KH type-2 domain.

The protein belongs to the TRAFAC class TrmE-Era-EngA-EngB-Septin-like GTPase superfamily. Era GTPase family. Monomer.

The protein resides in the cytoplasm. Its subcellular location is the cell membrane. Its function is as follows. An essential GTPase that binds both GDP and GTP, with rapid nucleotide exchange. Plays a role in 16S rRNA processing and 30S ribosomal subunit biogenesis and possibly also in cell cycle regulation and energy metabolism. The chain is GTPase Era from Lactiplantibacillus plantarum (strain ATCC BAA-793 / NCIMB 8826 / WCFS1) (Lactobacillus plantarum).